The chain runs to 113 residues: Large ribosomal subunit protein uL22 (113 aa).

The protein belongs to the universal ribosomal protein uL22 family. As to quaternary structure, part of the 50S ribosomal subunit.

In terms of biological role, this protein binds specifically to 23S rRNA; its binding is stimulated by other ribosomal proteins, e.g. L4, L17, and L20. It is important during the early stages of 50S assembly. It makes multiple contacts with different domains of the 23S rRNA in the assembled 50S subunit and ribosome. Functionally, the globular domain of the protein is located near the polypeptide exit tunnel on the outside of the subunit, while an extended beta-hairpin is found that lines the wall of the exit tunnel in the center of the 70S ribosome. This Geobacillus sp. (strain WCH70) protein is Large ribosomal subunit protein uL22.